The following is a 486-amino-acid chain: 2-hydroxymuconic semialdehyde dehydrogenase (486 aa).

Residues glutamate 254 and cysteine 288 contribute to the active site.

The protein belongs to the aldehyde dehydrogenase family.

It carries out the reaction (2Z,4E)-2-hydroxy-6-oxohexa-2,4-dienoate + NAD(+) + H2O = (2Z,4E)-2-hydroxyhexa-2,4-dienedioate + NADH + 2 H(+). It participates in aromatic compound metabolism; benzoate degradation via hydroxylation. Functionally, 2-hydroxymuconic acid semialdehyde can be converted to 2-hydroxypent-2,4-dienoate either directly by the action of 2-hydroxymuconic semialdehyde hydrolase (HMSH) or by the action of three sequential enzymes, the first of which is HMSD. The polypeptide is 2-hydroxymuconic semialdehyde dehydrogenase (dmpC) (Pseudomonas sp. (strain CF600)).